The primary structure comprises 113 residues: Dolichyl-diphosphooligosaccharide--protein glycosyltransferase subunit DAD1 (113 aa).

At S2 the chain carries N-acetylserine. Residues 2-30 (SASVLSVISRFLEEYLSATPQRLKLLDAY) lie on the Cytoplasmic side of the membrane. Residues 31 to 51 (LLYILLTGALQFGYCLLVGTF) form a helical membrane-spanning segment. P52 is a topological domain (lumenal). A helical transmembrane segment spans residues 53 to 73 (FNSFLSGFISCVGSFILAVCL). Topologically, residues 74-92 (RIQINPQNKADFQGISPER) are cytoplasmic. Residues 93–113 (AFADFLFASTILHLVVMNFVG) form a helical membrane-spanning segment.

This sequence belongs to the DAD/OST2 family. Component of the oligosaccharyltransferase (OST) complex. OST exists in two different complex forms which contain common core subunits RPN1, RPN2, OST48, OST4, DAD1 and TMEM258, either STT3A or STT3B as catalytic subunits, and form-specific accessory subunits. STT3A complex assembly occurs through the formation of 3 subcomplexes. Subcomplex 1 contains RPN1 and TMEM258, subcomplex 2 contains the STT3A-specific subunits STT3A, DC2/OSTC, and KCP2 as well as the core subunit OST4, and subcomplex 3 contains RPN2, DAD1, and OST48. The STT3A complex can form stable complexes with the Sec61 complex or with both the Sec61 and TRAP complexes.

The protein resides in the endoplasmic reticulum membrane. Its pathway is protein modification; protein glycosylation. Subunit of the oligosaccharyl transferase (OST) complex that catalyzes the initial transfer of a defined glycan (Glc(3)Man(9)GlcNAc(2) in eukaryotes) from the lipid carrier dolichol-pyrophosphate to an asparagine residue within an Asn-X-Ser/Thr consensus motif in nascent polypeptide chains, the first step in protein N-glycosylation. N-glycosylation occurs cotranslationally and the complex associates with the Sec61 complex at the channel-forming translocon complex that mediates protein translocation across the endoplasmic reticulum (ER). All subunits are required for a maximal enzyme activity. This chain is Dolichyl-diphosphooligosaccharide--protein glycosyltransferase subunit DAD1, found in Bos taurus (Bovine).